A 334-amino-acid polypeptide reads, in one-letter code: Protein-methionine-sulfoxide reductase catalytic subunit MsrP (334 aa).

The tat-type signal signal peptide spans 1–44 (MKKIRPLTEADVTAESAFFMQRRQVLKALGISAAALSLPSTAQA). Mo-molybdopterin contacts are provided by residues asparagine 88, 91–92 (YE), cysteine 146, threonine 181, asparagine 233, arginine 238, and 249–251 (GIK).

The protein belongs to the MsrP family. Heterodimer of a catalytic subunit (MsrP) and a heme-binding subunit (MsrQ). Mo-molybdopterin serves as cofactor. Predicted to be exported by the Tat system. The position of the signal peptide cleavage has not been experimentally proven.

The protein resides in the periplasm. The catalysed reaction is L-methionyl-[protein] + a quinone + H2O = L-methionyl-(S)-S-oxide-[protein] + a quinol. It carries out the reaction L-methionyl-[protein] + a quinone + H2O = L-methionyl-(R)-S-oxide-[protein] + a quinol. Part of the MsrPQ system that repairs oxidized periplasmic proteins containing methionine sulfoxide residues (Met-O), using respiratory chain electrons. Thus protects these proteins from oxidative-stress damage caused by reactive species of oxygen and chlorine generated by the host defense mechanisms. MsrPQ is essential for the maintenance of envelope integrity under bleach stress, rescuing a wide series of structurally unrelated periplasmic proteins from methionine oxidation, including the primary periplasmic chaperone SurA and the lipoprotein Pal. The catalytic subunit MsrP is non-stereospecific, being able to reduce both (R-) and (S-) diastereoisomers of methionine sulfoxide. The sequence is that of Protein-methionine-sulfoxide reductase catalytic subunit MsrP from Salmonella arizonae (strain ATCC BAA-731 / CDC346-86 / RSK2980).